A 398-amino-acid chain; its full sequence is 1-deoxy-D-xylulose 5-phosphate reductoisomerase (398 aa).

Positions 11, 12, 13, 14, 38, 39, and 125 each coordinate NADPH. Lys-126 is a 1-deoxy-D-xylulose 5-phosphate binding site. Glu-127 is a binding site for NADPH. Position 151 (Asp-151) interacts with Mn(2+). Residues Ser-152, Glu-153, Ser-179, and His-202 each coordinate 1-deoxy-D-xylulose 5-phosphate. Glu-153 contributes to the Mn(2+) binding site. Gly-208 contacts NADPH. 1-deoxy-D-xylulose 5-phosphate contacts are provided by Ser-215, Asn-220, Lys-221, and Glu-224. A Mn(2+)-binding site is contributed by Glu-224.

It belongs to the DXR family. The cofactor is Mg(2+). Requires Mn(2+) as cofactor.

It carries out the reaction 2-C-methyl-D-erythritol 4-phosphate + NADP(+) = 1-deoxy-D-xylulose 5-phosphate + NADPH + H(+). It functions in the pathway isoprenoid biosynthesis; isopentenyl diphosphate biosynthesis via DXP pathway; isopentenyl diphosphate from 1-deoxy-D-xylulose 5-phosphate: step 1/6. Catalyzes the NADPH-dependent rearrangement and reduction of 1-deoxy-D-xylulose-5-phosphate (DXP) to 2-C-methyl-D-erythritol 4-phosphate (MEP). The sequence is that of 1-deoxy-D-xylulose 5-phosphate reductoisomerase from Burkholderia pseudomallei (strain 1106a).